Consider the following 377-residue polypeptide: Membrane progestin receptor epsilon (377 aa).

Residues Met1–Ser40 are disordered. The Cytoplasmic segment spans residues Met1–Asn86. Residues Gly9–Ala26 show a composition bias toward low complexity. Residues Phe87–Leu107 form a helical membrane-spanning segment. The Extracellular segment spans residues Ser108–His116. The helical transmembrane segment at Pro117 to Cys137 threads the bilayer. The Cytoplasmic portion of the chain corresponds to Thr138–Ser162. A helical membrane pass occupies residues Tyr163 to Leu183. At Asp184–Leu205 the chain is on the extracellular side. Residues Ile206–Val226 form a helical membrane-spanning segment. The Cytoplasmic segment spans residues Ala227–Arg243. The chain crosses the membrane as a helical span at residues Thr244–Phe264. The Extracellular portion of the chain corresponds to Asp265–Pro301. The helical transmembrane segment at Gly302–Ile322 threads the bilayer. Residues Tyr323–Ala343 are Cytoplasmic-facing. A helical membrane pass occupies residues Pro344–Ile364. Topologically, residues Arg365–Lys377 are extracellular.

This sequence belongs to the ADIPOR family. As to quaternary structure, homodimer. As to expression, expression levels vary widely in a range of tissues. Expressed in the brain, at high level in the pituitary gland and also in hypothalamus, limbic system, caudate nucleus accumens, pons and olfactory bulb.

It localises to the cell membrane. Its function is as follows. Plasma membrane progesterone (P4) receptor coupled to G proteins. Seems to act through a G(s) mediated pathway. May be involved in regulating rapid P4 signaling in the nervous system. Also binds dehydroepiandrosterone (DHEA), pregnanolone, pregnenolone and allopregnanolone. In Homo sapiens (Human), this protein is Membrane progestin receptor epsilon.